A 919-amino-acid polypeptide reads, in one-letter code: Probable glucan 1,3-alpha-glucosidase (919 aa).

A signal peptide spans 1–28; that stretch reads MDPPPRPRPHRVAVLLLLLLASSPAARA. Asp-510 (nucleophile) is an active-site residue. Glu-513 is an active-site residue. The active-site Proton donor is Asp-586. The N-linked (GlcNAc...) asparagine glycan is linked to Asn-802.

Belongs to the glycosyl hydrolase 31 family. In terms of assembly, heterodimer of a catalytic alpha subunit and a beta subunit.

It localises to the endoplasmic reticulum. The enzyme catalyses N(4)-(alpha-D-Glc-(1-&gt;3)-alpha-D-Man-(1-&gt;2)-alpha-D-Man-(1-&gt;2)-alpha-D-Man-(1-&gt;3)-[alpha-D-Man-(1-&gt;2)-alpha-D-Man-(1-&gt;3)-[alpha-D-Man-(1-&gt;2)-alpha-D-Man-(1-&gt;6)]-alpha-D-Man-(1-&gt;6)]-beta-D-Man-(1-&gt;4)-beta-D-GlcNAc-(1-&gt;4)-beta-D-GlcNAc)-L-asparaginyl-[protein] + H2O = N(4)-(alpha-D-Man-(1-&gt;2)-alpha-D-Man-(1-&gt;2)-alpha-D-Man-(1-&gt;3)-[alpha-D-Man-(1-&gt;2)-alpha-D-Man-(1-&gt;3)-[alpha-D-Man-(1-&gt;2)-alpha-D-Man-(1-&gt;6)]-alpha-D-Man-(1-&gt;6)]-beta-D-Man-(1-&gt;4)-beta-D-GlcNAc-(1-&gt;4)-beta-D-GlcNAc)-L-asparaginyl-[protein] (N-glucan mannose isomer 9A1,2,3B1,2,3) + beta-D-glucose. It carries out the reaction N(4)-(alpha-D-Glc-(1-&gt;3)-alpha-D-Glc-(1-&gt;3)-alpha-D-Man-(1-&gt;2)-alpha-D-Man-(1-&gt;2)-alpha-D-Man-(1-&gt;3)-[alpha-D-Man-(1-&gt;2)-alpha-D-Man-(1-&gt;3)-[alpha-D-Man-(1-&gt;2)-alpha-D-Man-(1-&gt;6)]-alpha-D-Man-(1-&gt;6)]-beta-D-Man-(1-&gt;4)-beta-D-GlcNAc-(1-&gt;4)-beta-D-GlcNAc)-L-asparaginyl-[protein] + H2O = N(4)-(alpha-D-Glc-(1-&gt;3)-alpha-D-Man-(1-&gt;2)-alpha-D-Man-(1-&gt;2)-alpha-D-Man-(1-&gt;3)-[alpha-D-Man-(1-&gt;2)-alpha-D-Man-(1-&gt;3)-[alpha-D-Man-(1-&gt;2)-alpha-D-Man-(1-&gt;6)]-alpha-D-Man-(1-&gt;6)]-beta-D-Man-(1-&gt;4)-beta-D-GlcNAc-(1-&gt;4)-beta-D-GlcNAc)-L-asparaginyl-[protein] + beta-D-glucose. Its pathway is glycan metabolism; N-glycan metabolism. Functionally, cleaves sequentially the 2 innermost alpha-1,3-linked glucose residues from the Glc(2)Man(9)GlcNAc(2) oligosaccharide precursor of immature glycoproteins. May be required for defense response elicited by pathogen-associated molecular patterns (PAMPs). The polypeptide is Probable glucan 1,3-alpha-glucosidase (Oryza sativa subsp. japonica (Rice)).